A 209-amino-acid polypeptide reads, in one-letter code: Putative BTB/POZ domain-containing protein At2g40450 (209 aa).

One can recognise a BTB domain in the interval 24-98; it reads ADVRLKAGDS…IYRVDGSICS (75 aa).

It participates in protein modification; protein ubiquitination. May act as a substrate-specific adapter of an E3 ubiquitin-protein ligase complex (CUL3-RBX1-BTB) which mediates the ubiquitination and subsequent proteasomal degradation of target proteins. This chain is Putative BTB/POZ domain-containing protein At2g40450, found in Arabidopsis thaliana (Mouse-ear cress).